The sequence spans 306 residues: tRNA dimethylallyltransferase (306 aa).

Residue 11–18 coordinates ATP; that stretch reads GPTAVGKS. A substrate-binding site is contributed by 13-18; that stretch reads TAVGKS. The tract at residues 35 to 38 is interaction with substrate tRNA; it reads DSIQ.

It belongs to the IPP transferase family. As to quaternary structure, monomer. Mg(2+) is required as a cofactor.

It carries out the reaction adenosine(37) in tRNA + dimethylallyl diphosphate = N(6)-dimethylallyladenosine(37) in tRNA + diphosphate. In terms of biological role, catalyzes the transfer of a dimethylallyl group onto the adenine at position 37 in tRNAs that read codons beginning with uridine, leading to the formation of N6-(dimethylallyl)adenosine (i(6)A). The sequence is that of tRNA dimethylallyltransferase from Borreliella burgdorferi (strain ZS7) (Borrelia burgdorferi).